The chain runs to 398 residues: Substance-K receptor (398 aa).

At 1 to 32 (MGTCDIVTEANISSGPESNTTGITAFSMPSWQ) the chain is on the extracellular side. N-linked (GlcNAc...) asparagine glycosylation is found at Asn11 and Asn19. The chain crosses the membrane as a helical span at residues 33 to 56 (LALWATAYLALVLVAVTGNAIVIW). At 57 to 69 (IILAHRRMRTVTN) the chain is on the cytoplasmic side. The chain crosses the membrane as a helical span at residues 70-90 (YFIVNLALADLCMAAFNAAFN). Residues 91-107 (FVYASHNIWYFGRAFCY) lie on the Extracellular side of the membrane. A disulfide bond links Cys106 and Cys181. A helical membrane pass occupies residues 108 to 129 (FQNLFPITAMFVSIYSMTAIAA). Topologically, residues 130-149 (DRYMAIVHPFQPRLSAPSTK) are cytoplasmic. Residues 150–170 (AVIAGIWLVALALASPQCFYS) form a helical membrane-spanning segment. Over 171–196 (TVTMDQGATKCVVAWPEDSGGKTLLL) the chain is Extracellular. Residues 197–218 (YHLVVIALIYFLPLAVMFVAYS) form a helical membrane-spanning segment. The Cytoplasmic segment spans residues 219–251 (VIGLTLWRRAVPGHQAHGANLRHLQAMKKFVKT). A helical transmembrane segment spans residues 252–272 (MVLVVLTFAICWLPYHLYFIL). The Extracellular portion of the chain corresponds to 273–290 (GSFQEDIYCHKFIQQVYL). Residues 291–310 (ALFWLAMSSTMYNPIIYCCL) form a helical membrane-spanning segment. At 311–398 (NHRFRSGFRL…LAPTKTHVEI (88 aa)) the chain is on the cytoplasmic side. Cys324 carries the S-palmitoyl cysteine lipid modification.

It belongs to the G-protein coupled receptor 1 family.

The protein localises to the cell membrane. Its function is as follows. This is a receptor for the tachykinin neuropeptide substance K (neurokinin A). It is associated with G proteins that activate a phosphatidylinositol-calcium second messenger system. The rank order of affinity of this receptor to tachykinins is: substance K &gt; neuromedin-K &gt; substance P. The sequence is that of Substance-K receptor (TACR2) from Homo sapiens (Human).